We begin with the raw amino-acid sequence, 66 residues long: Large ribosomal subunit protein bL33c (66 aa).

Belongs to the bacterial ribosomal protein bL33 family.

The protein localises to the plastid. It is found in the chloroplast. The chain is Large ribosomal subunit protein bL33c from Chloranthus spicatus (Chulantree).